A 264-amino-acid polypeptide reads, in one-letter code: DNA repair protein RecO (264 aa).

It belongs to the RecO family.

In terms of biological role, involved in DNA repair and RecF pathway recombination. This Prosthecochloris aestuarii (strain DSM 271 / SK 413) protein is DNA repair protein RecO.